A 3242-amino-acid chain; its full sequence is tRNA nuclease CdiA (3242 aa).

The first 32 residues, M1 to A32, serve as a signal peptide directing secretion. The segment at P36 to T322 is two-partner system transport domain (TPS). The tract at residues G351–N1376 is FHA-1. Residues Q1377–W1668 form a receptor-binding domain (RBD) region. The segment at W1668–N1852 is YP domain. Residues G1853–N1913 are periplasmic FHA-1 repeat (pFR). The tract at residues D2021–S2631 is FHA-2. Residues R2075 to H2091 are compositionally biased toward basic and acidic residues. Disordered stretches follow at residues R2075 to V2094, G2310 to G2333, and T2439 to N2481. Residues G2322–G2333 are compositionally biased toward polar residues. The interval G2969–I3242 is DUF638-CT domain; not toxic when added to the outside of E.coli, does not interfere with F-pilus mediated conjugation, toxic when expressed intracellularly. The segment at P2972–V3015 is pre-toxin (PT) domain. The short motif at V3016–N3019 is the VENN CT cleavage motif element. A toxin import domain; sufficient to import the tRNA nuclease domain of colicin E5 into E.coli, may bind F-pili region spans residues V3016–Y3097. Positions V3016 to I3242 are CT domain; toxic when added to the outside of E.coli and when expressed intracellularly. An inner membrane translocation domain (IMTD), targets protein to FtsH region spans residues A3020–E3141. The segment at A3020–I3242 is C-terminal effector domain (CT). The interval G3098–I3242 is tRNase function, does not interfere with F-pilus mediated conjugation. The interval K3116–K3146 is disordered. Residues N3134–K3146 are compositionally biased toward basic and acidic residues. Residues K3137–K3238 are a coiled coil. Active-site residues include D3170, H3193, and E3196.

In the N-terminal section; belongs to the CdiA toxin family. As to quaternary structure, the C-terminal (CT) domain interacts with cognate CdiI but not non-cognate CdiI from D.dadantii strain 3937. CdiA-CT also interacts with CysK; this is blocked upon preincubation with O-acetyl-L-serine. CysK forms a complex with CdiA-CT/CdiI. One CdiA toxin subunit binds to each subunit of the CysK homodimer, and one CdiI immunity protein binds to each toxin subunit; the immune complex is thus a dimer of trimers. The 4 C-terminal residues of CdiA fit into the active site of CysK. The cofactor is a divalent metal cation.

Its subcellular location is the secreted. It is found in the target cell membrane. The protein resides in the target cell. It localises to the target cell cytoplasm. Its function is as follows. Toxic component of a toxin-immunity protein module, which functions as a cellular contact-dependent growth inhibition (CDI) system. CDI modules allow bacteria to communicate with and inhibit the growth of closely related neighboring bacteria in a contact-dependent fashion (target cell counts decrease 100- to 1000-fold). CdiA toxicity is neutralized by its cognate immunity protein CdiI, but not by CdiI from other bacteria. Uses heterotrimeric OmpC and OmpF as target cell outer membrane receptors; receptor function depends on polymorphisms in extracellular loops L4 and L5 of OmpC; interacts with itself and closely related bacteria but also with OmpC from E.cloacae ATCC 13047. Its ability to preferentially bind to 'self' receptors suggests it may also play a role in self-recognition and kin selection. A bamA mutation that decreases its expression about 5-fold is partially resistant to this strain of CdiA, probably due to decreased outer membrane receptor protein assembly. Isolated CdiA-CT is imported in an F-pilus-mediated fashion; CdiA-CT inhibits F-mediated conjugation, probably via its N-terminus (residues 3016-3097), although it is not clear if this is physiologically significant. Gains access to the cytoplasm of target cells by using integral inner membrane protein FtsH. The C-terminal domain (CT) cleaves within tRNA anticodon loops; this activity is inhibited by cognate CdiI. tRNase activity of CdiA-CT is stimulated by CysK, although the extreme C-terminus (residues 3098-3242) has tRNase activity in the absence of CysK. In vivo CDI toxicity requires CysK. CysK stabilizes CdiA-CT, allowing it to bind tRNA substrate; neither CdiA-CT nor CysK bind tRNA alone in vitro. Purified CdiA-CT (residues 3016-3242) inhibits E.coli cell growth when added to cultures alone or in complex with cognate CdiI, growth is inhibited when cognate CdiI is present within the cell but not when a CdiA-CT/CdiI complex is added extracellularly, suggesting CdiA-CT alone but not the CdiA-CT/CdiI complex is imported into the target cell. Functionally, the CdiA protein is thought to be exported from the cell through the central lumen of CdiB, the other half of its two-partner system (TPS). The TPS domain probably remains associated with CdiB while the FHA-1 domain forms an extended filament with the receptor-binding domain (RBD) at its extremity; in the secretion arrested state the C-terminus of the RBD and YP domains form a hairpin-like structure as the FHA-2, PT and CT domains are periplasmic. The YP domain is probably responsible for this arrest at the point where it re-enters the host cell periplasm. Upon binding to a target cell outer membrane receptor (heterotrimeric OmpC-OmpF for this CDI) a signal is transmitted to activate secretion. The filament elongates slightly, the rest of CdiA is secreted and the FHA-2 domain becomes stably associated with the target cell's outer membrane where it facilitates entry of the toxic CT domain into the target cell periplasm. From there the toxic CT domain is cleaved and gains access to the target cell cytoplasm via an inner membrane protein (FtsH for this CDI). This chain is tRNA nuclease CdiA, found in Escherichia coli O6:K15:H31 (strain 536 / UPEC).